Reading from the N-terminus, the 165-residue chain is Endoribonuclease YbeY (165 aa).

Residues His130, His134, and His140 each contribute to the Zn(2+) site.

Belongs to the endoribonuclease YbeY family. The cofactor is Zn(2+).

It localises to the cytoplasm. Its function is as follows. Single strand-specific metallo-endoribonuclease involved in late-stage 70S ribosome quality control and in maturation of the 3' terminus of the 16S rRNA. This is Endoribonuclease YbeY from Streptococcus pneumoniae serotype 2 (strain D39 / NCTC 7466).